The sequence spans 388 residues: Serpin B11 (388 aa).

The interval 338–362 is RCL; it reads EEGTEAAAATGESISVKRLPVTVQF.

Belongs to the serpin family. Ov-serpin subfamily. As to expression, expressed in eye, lung, lymphocytes, thymus, stomach, uterus, heart, brain, liver, skeletal muscle, and in day 7, 15, and 17 embryos.

The protein resides in the cytoplasm. Its function is as follows. Inhibitor of serine proteases. Has moderate inhibitory activity for trypsin-like peptidases, but also some activity with cysteine peptidases, cathepsin L, K, and V, and the serine peptidase, tryptase gamma. The polypeptide is Serpin B11 (Serpinb11) (Mus musculus (Mouse)).